The sequence spans 188 residues: dCTP deaminase (188 aa).

DCTP contacts are provided by residues 111-116 (KSTYAR), 135-137 (TLE), Gln-156, Tyr-170, and Gln-180. Glu-137 functions as the Proton donor/acceptor in the catalytic mechanism.

The protein belongs to the dCTP deaminase family. As to quaternary structure, homotrimer.

It carries out the reaction dCTP + H2O + H(+) = dUTP + NH4(+). It participates in pyrimidine metabolism; dUMP biosynthesis; dUMP from dCTP (dUTP route): step 1/2. Catalyzes the deamination of dCTP to dUTP. This is dCTP deaminase from Francisella philomiragia subsp. philomiragia (strain ATCC 25017 / CCUG 19701 / FSC 153 / O#319-036).